Consider the following 84-residue polypeptide: MDISRAEQRILHHLAQGGRIEITREGKAIAEIRCFTRDGWVYPGVDLELFRKLKRKRAIKSSAGKPYRITERGLHLVRSELNNR.

The protein belongs to the UPF0386 family.

This is UPF0386 protein R01313 from Rhizobium meliloti (strain 1021) (Ensifer meliloti).